Consider the following 923-residue polypeptide: Neuropilin-1 (923 aa).

An N-terminal signal peptide occupies residues 1-21 (MERGLPLLCAVLALVLAPAGA). The Extracellular segment spans residues 22–856 (FRNDKCGDTI…PGNVLKTLDP (835 aa)). Intrachain disulfides connect C27–C54, C82–C104, and C147–C173. CUB domains are found at residues 27-141 (CGDT…YEIF) and 147-265 (CSQN…YSVL). N-linked (GlcNAc...) asparagine glycosylation is present at N150. Residues E195, D209, and D250 each coordinate Ca(2+). C206 and C228 are joined by a disulfide. N-linked (GlcNAc...) asparagine glycans are attached at residues N261, N300, and N522. 2 disulfide bridges follow: C275–C424 and C431–C583. 2 F5/8 type C domains span residues 275–424 (CMEA…VYGC) and 431–583 (CSGM…LLGC). O-linked (Xyl...) (chondroitin sulfate) serine; alternate glycosylation occurs at S612. O-linked (Xyl...) (heparan sulfate) serine; alternate glycosylation occurs at S612. An MAM domain is found at 645–811 (TYGFNCEFGW…NHISQEDCAK (167 aa)). Residues 820–845 (PEIKIDETGSTPGYEGEGEGDKNISR) are disordered. Residue S829 is glycosylated (O-linked (Xyl...) (chondroitin sulfate) serine). N-linked (GlcNAc...) asparagine glycosylation is present at N842. The helical transmembrane segment at 857-879 (ILITIIAMSALGVLLGAVCGVVL) threads the bilayer. Residues 880-923 (YCACWHNGMSERNLSALENYNFELVDGVKLKKDKLNTQSTYSEA) are Cytoplasmic-facing. The residue at position 894 (S894) is a Phosphoserine.

It belongs to the neuropilin family. Homodimer, and heterodimer with NRP2. Interacts with FER. Interacts with PLXNB1. Interacts with VEGFA. Interacts with ABCB8/MITOSUR in mitochondria. In terms of assembly, (Microbial infection) Interacts with SARS coronavirus-2/SARS-CoV-2 spike protein S1 (via the CendR motif RRAR). As to expression, the expression of isoforms 1 and 2 does not seem to overlap. Expressed in olfactory epithelium (at protein level). Expressed in fibroblasts (at protein level). Expressed by the blood vessels of different tissues. In the developing embryo it is found predominantly in the nervous system. In adult tissues, it is highly expressed in heart and placenta; moderately in lung, liver, skeletal muscle, kidney and pancreas; and low in adult brain. Expressed in the central nervous system, including olfactory related regions such as the olfactory tubercles and paraolfactory gyri. The expression of isoforms 1 and 2 does not seem to overlap. Found in liver hepatocytes, kidney distal and proximal tubules.

The protein localises to the secreted. It localises to the mitochondrion membrane. The protein resides in the cell membrane. It is found in the cytoplasm. Cell-surface receptor involved in the development of the cardiovascular system, in angiogenesis, in the formation of certain neuronal circuits and in organogenesis outside the nervous system. Mediates the chemorepulsant activity of semaphorins. Recognizes a C-end rule (CendR) motif R/KXXR/K on its ligands which causes cellular internalization and vascular leakage. It binds to semaphorin 3A, the PLGF-2 isoform of PGF, the VEGF165 isoform of VEGFA and VEGFB. Coexpression with KDR results in increased VEGF165 binding to KDR as well as increased chemotaxis. Regulates VEGF-induced angiogenesis. Binding to VEGFA initiates a signaling pathway needed for motor neuron axon guidance and cell body migration, including for the caudal migration of facial motor neurons from rhombomere 4 to rhombomere 6 during embryonic development. Regulates mitochondrial iron transport via interaction with ABCB8/MITOSUR. Functionally, (Microbial infection) Acts as a host factor for human coronavirus SARS-CoV-2 infection. Recognizes and binds to CendR motif RRAR on SARS-CoV-2 spike protein S1 which enhances SARS-CoV-2 infection. Its function is as follows. Binds VEGF-165 and may inhibit its binding to cells. May induce apoptosis by sequestering VEGF-165. May bind as well various members of the semaphorin family. Its expression has an averse effect on blood vessel number and integrity. In Homo sapiens (Human), this protein is Neuropilin-1.